A 366-amino-acid chain; its full sequence is 2-aminoethylphosphonate--pyruvate transaminase (366 aa).

Lysine 194 carries the post-translational modification N6-(pyridoxal phosphate)lysine.

Belongs to the class-V pyridoxal-phosphate-dependent aminotransferase family. PhnW subfamily. In terms of assembly, homodimer. Pyridoxal 5'-phosphate serves as cofactor.

The catalysed reaction is (2-aminoethyl)phosphonate + pyruvate = phosphonoacetaldehyde + L-alanine. Its function is as follows. Involved in phosphonate degradation. In Lactiplantibacillus plantarum (strain ATCC BAA-793 / NCIMB 8826 / WCFS1) (Lactobacillus plantarum), this protein is 2-aminoethylphosphonate--pyruvate transaminase.